The primary structure comprises 533 residues: Heterogeneous nuclear ribonucleoprotein Q (533 aa).

Ala-2 is modified (N-acetylalanine). Ser-69 carries the phosphoserine modification. RRM domains lie at 72-151 (TEIF…ISVA), 153-235 (NRLF…WADP), and 248-318 (KVLF…FAKP). Lys-78 is covalently cross-linked (Glycyl lysine isopeptide (Lys-Gly) (interchain with G-Cter in SUMO2)). Position 131 is an N6-acetyllysine (Lys-131). Lys-273 carries the post-translational modification N6-acetyllysine. The residue at position 283 (Tyr-283) is a Phosphotyrosine. The segment at 310-471 (NIEIVFAKPP…GARGGRGGNV (162 aa)) is interaction with APOBEC1. Position 354 is an asymmetric dimethylarginine; by PRMT1; alternate (Arg-354). Residue Arg-354 is modified to Omega-N-methylarginine; by PRMT1; alternate. 6 consecutive repeat copies span residues 358–360 (RGG), 361–363 (RGG), 370–374 (YYGYE), 379–382 (YYGY), 388–390 (RGG), and 395–398 (YYGY). The 8 X 3 AA repeats of R-G-G stretch occupies residues 358-469 (RGGRGGYGYP…VRGARGGRGG (112 aa)). Residues 370-398 (YYGYEDYYDYYGYDYHNYRGGYEDPYYGY) are 3 X 4 AA repeats of Y-Y-G-Y. Residue Arg-406 is modified to Omega-N-methylarginine; by PRMT1. Residues 407 to 533 (GRGGRGARGA…YQDTFGQQWK (127 aa)) form a disordered region. A 1-4 repeat occupies 408 to 410 (RGG). The span at 414-432 (RGAAPSRGRGAAPPRGRAG) shows a compositional bias: low complexity. An Asymmetric dimethylarginine; by PRMT1 modification is found at Arg-420. Residue Arg-428 is modified to Asymmetric dimethylarginine; by PRMT1; alternate. Arg-428 bears the Omega-N-methylarginine; by PRMT1; alternate mark. The tract at residues 428–459 (RGRAGYSQRGGPGSARGVRGARGGAQQQRGRG) is interaction with SMN. Arg-436 is modified (asymmetric dimethylarginine; alternate). At Arg-436 the chain carries Omega-N-methylarginine; alternate. The 1-5 repeat unit spans residues 436–438 (RGG). Asymmetric dimethylarginine; by PRMT1; alternate occurs at positions 446 and 449. 2 positions are modified to omega-N-methylarginine; by PRMT1; alternate: Arg-446 and Arg-449. Repeat copies occupy residues 449–451 (RGG), 464–466 (RGG), and 467–469 (RGG). Gly residues predominate over residues 460–472 (VRGARGGRGGNVG). A Bipartite nuclear localization signal motif is present at residues 474–488 (KRKADGYNQPDSKRR). Residues 490–505 (TNNQNWGSQPIAQQPL) show a composition bias toward polar residues. Ser-497 is subject to Phosphoserine. Lys-517 participates in a covalent cross-link: Glycyl lysine isopeptide (Lys-Gly) (interchain with G-Cter in SUMO2).

Identified in a histone pre-mRNA complex, at least composed of ERI1, LSM11, SLBP, SNRPB, SYNCRIP and YBX1. Identified in the spliceosome C complex. Component of the coding region determinant (CRD)-mediated complex, composed of DHX9, HNRNPU, IGF2BP1, SYNCRIP and YBX1. Identified in a mRNP complex, at least composed of DHX9, DDX3X, ELAVL1, HNRNPU, IGF2BP1, ILF3, PABPC1, PCBP2, PTBP2, STAU1, STAU2, SYNCRIP and YBX1. Identified in a mRNP granule complex, at least composed of ACTB, ACTN4, DHX9, ERG, HNRNPA1, HNRNPA2B1, HNRNPAB, HNRNPD, HNRNPL, HNRNPR, HNRNPU, HSPA1, HSPA8, IGF2BP1, ILF2, ILF3, NCBP1, NCL, PABPC1, PABPC4, PABPN1, RPLP0, RPS3, RPS3A, RPS4X, RPS8, RPS9, SYNCRIP, YBX1 and untranslated mRNAs. Component of the APOB mRNA editosome. Interacts with APOBEC1 and A1CF. Part of a complex associated with the FOS mCRD domain and consisting of PABPC1, PAIP1, CSDE1/UNR, HNRPD and SYNCRIP. Interacts with HNRPR, SMN, POLR2A hyperphosphorylated C-terminal domain, minute virus of mice (MVM) NS1 protein and through its C-terminal domain with SYT7, SYT8 and SYT9. The non-phosphorylated and phosphorylated forms are colocalized with PAIP1 in polysomes. Interacts with GTPBP1. Interacts with HABP4. Phosphorylated on tyrosine. The membrane-bound form found in microsomes is phosphorylated in vitro by insulin receptor tyrosine kinase (INSR). Phosphorylation is inhibited upon binding to RNA, whereas the cytoplasmic form is poorly phosphorylated.

It is found in the nucleus. It localises to the nucleoplasm. Its subcellular location is the cytoplasm. The protein resides in the microsome. Its function is as follows. Heterogenous nuclear ribonucleoprotein (hnRNP) implicated in mRNA processing mechanisms. Component of the CRD-mediated complex that promotes MYC mRNA stability. Is associated in vitro with pre-mRNA, splicing intermediates and mature mRNA protein complexes. Binds to apoB mRNA AU-rich sequences. Part of the APOB mRNA editosome complex and may modulate the postranscriptional C to U RNA-editing of the APOB mRNA through either by binding to A1CF (APOBEC1 complementation factor), to APOBEC1 or to RNA itself. May be involved in translationally coupled mRNA turnover. Implicated with other RNA-binding proteins in the cytoplasmic deadenylation/translational and decay interplay of the FOS mRNA mediated by the major coding-region determinant of instability (mCRD) domain. Interacts in vitro preferentially with poly(A) and poly(U) RNA sequences. May be involved in cytoplasmic vesicle-based mRNA transport through interaction with synaptotagmins. This chain is Heterogeneous nuclear ribonucleoprotein Q (Syncrip), found in Rattus norvegicus (Rat).